The chain runs to 329 residues: 3-isopropylmalate dehydrogenase (329 aa).

Residues arginine 83, arginine 93, arginine 114, and aspartate 200 each coordinate substrate. Mg(2+)-binding residues include aspartate 200, aspartate 224, and aspartate 228. 257-269 (GSAPQIAGKNIAN) serves as a coordination point for NAD(+).

It belongs to the isocitrate and isopropylmalate dehydrogenases family. As to quaternary structure, homotetramer. Mg(2+) is required as a cofactor. The cofactor is Mn(2+).

The protein resides in the cytoplasm. The catalysed reaction is (2R,3S)-3-isopropylmalate + NAD(+) = 4-methyl-2-oxopentanoate + CO2 + NADH. The protein operates within amino-acid biosynthesis; L-leucine biosynthesis; L-leucine from 3-methyl-2-oxobutanoate: step 3/4. Functionally, catalyzes the oxidation of 3-carboxy-2-hydroxy-4-methylpentanoate (3-isopropylmalate) to 3-carboxy-4-methyl-2-oxopentanoate. The product decarboxylates to 4-methyl-2 oxopentanoate. The protein is 3-isopropylmalate dehydrogenase (leuB) of Methanothermobacter thermautotrophicus (strain ATCC 29096 / DSM 1053 / JCM 10044 / NBRC 100330 / Delta H) (Methanobacterium thermoautotrophicum).